The sequence spans 198 residues: Probable GTP-binding protein EngB (198 aa).

The EngB-type G domain occupies 27–198 (DLPEVALAGR…ESWDTILSEL (172 aa)). GTP-binding positions include 35–42 (GRSNVGKS), 62–66 (GKTQL), 80–83 (DVPG), 147–150 (TKAD), and 179–181 (FSS). Residues Ser-42 and Thr-64 each contribute to the Mg(2+) site.

The protein belongs to the TRAFAC class TrmE-Era-EngA-EngB-Septin-like GTPase superfamily. EngB GTPase family. Mg(2+) is required as a cofactor.

Its function is as follows. Necessary for normal cell division and for the maintenance of normal septation. The polypeptide is Probable GTP-binding protein EngB (Streptococcus agalactiae serotype Ia (strain ATCC 27591 / A909 / CDC SS700)).